Here is a 598-residue protein sequence, read N- to C-terminus: Elongation factor 4 (598 aa).

The tr-type G domain maps to 4–186 (SHIRNFAIIA…AIVSRLPAPS (183 aa)). GTP contacts are provided by residues 16–21 (DHGKST) and 133–136 (NKID).

The protein belongs to the TRAFAC class translation factor GTPase superfamily. Classic translation factor GTPase family. LepA subfamily.

It is found in the cell inner membrane. The catalysed reaction is GTP + H2O = GDP + phosphate + H(+). Required for accurate and efficient protein synthesis under certain stress conditions. May act as a fidelity factor of the translation reaction, by catalyzing a one-codon backward translocation of tRNAs on improperly translocated ribosomes. Back-translocation proceeds from a post-translocation (POST) complex to a pre-translocation (PRE) complex, thus giving elongation factor G a second chance to translocate the tRNAs correctly. Binds to ribosomes in a GTP-dependent manner. The chain is Elongation factor 4 from Ehrlichia chaffeensis (strain ATCC CRL-10679 / Arkansas).